The following is a 206-amino-acid chain: dTTP/UTP pyrophosphatase (206 aa).

The active-site Proton acceptor is Asp79.

This sequence belongs to the Maf family. YhdE subfamily. Requires a divalent metal cation as cofactor.

It localises to the cytoplasm. It catalyses the reaction dTTP + H2O = dTMP + diphosphate + H(+). The catalysed reaction is UTP + H2O = UMP + diphosphate + H(+). Functionally, nucleoside triphosphate pyrophosphatase that hydrolyzes dTTP and UTP. May have a dual role in cell division arrest and in preventing the incorporation of modified nucleotides into cellular nucleic acids. The sequence is that of dTTP/UTP pyrophosphatase from Rhizobium meliloti (strain 1021) (Ensifer meliloti).